The following is a 193-amino-acid chain: Thymidine kinase (193 aa).

ATP contacts are provided by residues 9–16 and 87–90; these read ASMNAGKS and DEAQ. E88 serves as the catalytic Proton acceptor. C145, C147, C182, and H185 together coordinate Zn(2+).

Belongs to the thymidine kinase family. As to quaternary structure, homotetramer.

Its subcellular location is the cytoplasm. The enzyme catalyses thymidine + ATP = dTMP + ADP + H(+). This is Thymidine kinase from Zymomonas mobilis subsp. mobilis (strain ATCC 31821 / ZM4 / CP4).